The chain runs to 522 residues: Anti-sigma-I factor RsgI4 (522 aa).

At 1 to 51 (MNLGVVIKIKRKKAIIVTETGEFKAVNARNGMFLGQKILFDQQDVIENNRN) the chain is on the cytoplasmic side. The region spanning 2–49 (NLGVVIKIKRKKAIIVTETGEFKAVNARNGMFLGQKILFDQQDVIENN) is the RsgI N-terminal anti-sigma domain. A helical membrane pass occupies residues 52-72 (GIGLAYSAAIAGMVAVFVFMF). Over 73 to 522 (TYFGLHNFNG…SGILKWGREP (450 aa)) the chain is Extracellular. Residues 311–361 (SAKTPERATTVPVNTPVKPTDAPTKSPATATATATRAPVKATATPAKTLKP) show a composition bias toward low complexity. The segment at 311-371 (SAKTPERATT…SDTPVKTPDG (61 aa)) is disordered. A CBM3 domain is found at 371-522 (GEQSVKVRFY…SGILKWGREP (152 aa)).

Interacts (via RsgI N-terminal anti-sigma domain) with SigI4.

It is found in the cell membrane. Functionally, anti-sigma factor for SigI4. Negatively regulates SigI4 activity through direct interaction. Binding of the polysaccharide substrate to the extracellular C-terminal sensing domain of RsgI4 may induce a conformational change in its N-terminal cytoplasmic region, leading to the release and activation of SigI4. In Acetivibrio thermocellus (strain ATCC 27405 / DSM 1237 / JCM 9322 / NBRC 103400 / NCIMB 10682 / NRRL B-4536 / VPI 7372) (Clostridium thermocellum), this protein is Anti-sigma-I factor RsgI4.